Reading from the N-terminus, the 132-residue chain is Small ribosomal subunit protein uS8c (132 aa).

It belongs to the universal ribosomal protein uS8 family. Part of the 30S ribosomal subunit.

It is found in the plastid. It localises to the chloroplast. In terms of biological role, one of the primary rRNA binding proteins, it binds directly to 16S rRNA central domain where it helps coordinate assembly of the platform of the 30S subunit. This chain is Small ribosomal subunit protein uS8c (rps8), found in Buxus microphylla (Littleleaf boxwood).